Reading from the N-terminus, the 320-residue chain is Putative S-adenosyl-L-methionine-dependent methyltransferase MAP_4078 (320 aa).

S-adenosyl-L-methionine contacts are provided by residues aspartate 132 and 161–162 (DL). Positions 294 to 320 (PPHDIEDAIPQTRFVAAQRTERTRPDR) are disordered.

This sequence belongs to the UPF0677 family.

Exhibits S-adenosyl-L-methionine-dependent methyltransferase activity. This Mycolicibacterium paratuberculosis (strain ATCC BAA-968 / K-10) (Mycobacterium paratuberculosis) protein is Putative S-adenosyl-L-methionine-dependent methyltransferase MAP_4078.